The sequence spans 257 residues: Deoxyribose-phosphate aldolase (257 aa).

Catalysis depends on Asp-102, which acts as the Proton donor/acceptor. The Schiff-base intermediate with acetaldehyde role is filled by Lys-166. The active-site Proton donor/acceptor is the Lys-198.

Belongs to the DeoC/FbaB aldolase family. DeoC type 2 subfamily.

The protein resides in the cytoplasm. The catalysed reaction is 2-deoxy-D-ribose 5-phosphate = D-glyceraldehyde 3-phosphate + acetaldehyde. It participates in carbohydrate degradation; 2-deoxy-D-ribose 1-phosphate degradation; D-glyceraldehyde 3-phosphate and acetaldehyde from 2-deoxy-alpha-D-ribose 1-phosphate: step 2/2. Catalyzes a reversible aldol reaction between acetaldehyde and D-glyceraldehyde 3-phosphate to generate 2-deoxy-D-ribose 5-phosphate. The chain is Deoxyribose-phosphate aldolase from Shewanella woodyi (strain ATCC 51908 / MS32).